A 587-amino-acid chain; its full sequence is Putative phagocytic receptor 1b (587 aa).

The N-terminal stretch at 1 to 23 (MRLQILLIYLICIIVSSIVLVES) is a signal peptide. Transmembrane regions (helical) follow at residues 223 to 243 (LSVM…AIMI), 294 to 314 (IGWQ…FGMF), 319 to 339 (GGNM…ISGY), 354 to 374 (AWNI…VVIL), 390 to 410 (ILTM…LTVV), 448 to 468 (ILIA…YIFN), 480 to 500 (GILC…TVAL), 524 to 544 (VVFI…MYGL), and 556 to 576 (IVCF…SLIF).

The protein belongs to the nonaspanin (TM9SF) (TC 9.A.2) family.

It localises to the membrane. Involved in adhesion and phagocytosis of hydrophilic particles. This chain is Putative phagocytic receptor 1b (phg1b), found in Dictyostelium discoideum (Social amoeba).